Here is a 304-residue protein sequence, read N- to C-terminus: Ribonuclease BN (304 aa).

Residues His63, His65, Asp67, His68, His140, Asp211, and His269 each coordinate Zn(2+). The active-site Proton acceptor is Asp67.

The protein belongs to the RNase Z family. RNase BN subfamily. In terms of assembly, homodimer. Zn(2+) serves as cofactor.

Its function is as follows. Zinc phosphodiesterase, which has both exoribonuclease and endoribonuclease activities. In Cronobacter sakazakii (strain ATCC BAA-894) (Enterobacter sakazakii), this protein is Ribonuclease BN.